The following is a 254-amino-acid chain: Allene oxide cyclase 1, chloroplastic (254 aa).

Residues 1–78 (MASSTISLQS…QNLGNTENPR (78 aa)) constitute a chloroplast transit peptide. Over residues 44-56 (SNGPGSSSPTSFT) the composition is skewed to low complexity. A disordered region spans residues 44-79 (SNGPGSSSPTSFTPKKKLTPTRALSQNLGNTENPRP). A compositionally biased stretch (polar residues) spans 65–77 (RALSQNLGNTENP).

This sequence belongs to the allene oxide cyclase family. Highly expressed in fully developed leaves.

The protein resides in the plastid. It localises to the chloroplast. It carries out the reaction (9Z,13S,15Z)-12,13-epoxyoctadeca-9,11,15-trienoate = (9S,13S,15Z)-12-oxophyto-10,15-dienoate. In terms of biological role, involved in the production of 12-oxo-phytodienoic acid (OPDA), a precursor of jasmonic acid. The chain is Allene oxide cyclase 1, chloroplastic (AOC1) from Arabidopsis thaliana (Mouse-ear cress).